The primary structure comprises 517 residues: Xaa-Pro dipeptidase (517 aa).

The Mn(2+) site is built by Asp-244, Asp-255, His-336, Glu-381, and Glu-420.

This sequence belongs to the peptidase M24B family. Bacterial-type prolidase subfamily. In terms of assembly, monomer. Requires Mn(2+) as cofactor.

The catalysed reaction is Xaa-L-Pro dipeptide + H2O = an L-alpha-amino acid + L-proline. It carries out the reaction diisopropyl fluorophosphate + H2O = diisopropyl phosphate + fluoride + 2 H(+). It catalyses the reaction An aryl dialkyl phosphate + H2O = dialkyl phosphate + an aryl alcohol.. Functionally, splits dipeptides with a prolyl or hydroxyprolyl residue in the C-terminal position and a nonpolar amino acid at the N-terminal position. Also catalyzes the hydrolysis of toxic organophosphorus cholinesterase-inhibiting compounds including insecticide paraoxon and nerve gases such as diisopropylfluorophosphate (DFP), O-isopropyl methylphosphonofluoridate (sarin), O-pinacolyl methylphosphonofluoridate (soman), and O-cyclohexyl methylphosphonofluoridate. This is Xaa-Pro dipeptidase (pepQ) from Alteromonas sp.